The following is a 41-amino-acid chain: Disintegrin obtustatin (41 aa).

Disulfide bonds link cysteine 1–cysteine 10, cysteine 6–cysteine 29, cysteine 7–cysteine 34, and cysteine 19–cysteine 36. One can recognise a Disintegrin domain in the interval 1–41 (CTTGPCCRQCKLKPAGTTCWKTSLTSHYCTGKSCDCPLYPG). The short motif at 21-23 (KTS) is the Cell attachment site; atypical (KTS) element.

The protein belongs to the disintegrin family. Short disintegrin subfamily. As to quaternary structure, monomer. Expressed by the venom gland.

The protein resides in the secreted. Its function is as follows. Is a potent and selective inhibitor of alpha-1/beta-1 (ITGA1/ITGB1) integrin. It blocks the adhesion of alpha-1/beta-1-expressing K562 cells to immobilized collagens IV and I with IC(50) of 2 and 0.5 nM, respectively. Potently inhibits angiogenesis in chicken and in mouse model and reduces tumor development by half. Is 25-fold less potent than viperistatin. This chain is Disintegrin obtustatin, found in Macrovipera lebetina obtusa (Levant blunt-nosed viper).